The sequence spans 424 residues: Tubulin gamma chain, nucleomorph (424 aa).

Residue 137–143 coordinates GTP; the sequence is NGGTGAG.

It belongs to the tubulin family.

Functionally, tubulin is the major constituent of microtubules. The gamma chain is found at microtubule organizing centers (MTOC) such as the spindle poles or the centrosome, suggesting that it is involved in the minus-end nucleation of microtubule assembly. This Guillardia theta (Cryptophyte) protein is Tubulin gamma chain, nucleomorph (tubG).